The sequence spans 344 residues: uncharacterized protein (344 aa).

A run of 8 helical transmembrane segments spans residues 25–45 (GAGWACGVTVVLPPPGTVGAV), 68–88 (FVDALLLAGGSAYGLAAADGV), 104–124 (GVVPIVPGAVIFDLPVGGWNC), 133–153 (SACAAAGVDVAVGTVGVGVGA), 161–181 (GVGTASATLQSGVTVGVLAVV), 224–244 (LGAFNTPFNTTIGVIACDAAL), 276–296 (VFALATGAVAVPPEAGVPAAL), and 302–322 (LVTAVGAAAADCLARAVLAGV).

This sequence belongs to the peptidase S58 family.

Its subcellular location is the cell membrane. In terms of biological role, aminopeptidase. This is an uncharacterized protein from Mycobacterium bovis (strain ATCC BAA-935 / AF2122/97).